A 175-amino-acid polypeptide reads, in one-letter code: Orotate phosphoribosyltransferase (175 aa).

5-phospho-alpha-D-ribose 1-diphosphate contacts are provided by residues Arg-89, Lys-90, Lys-93, and 115-123; that span reads EDIATTGQS. Orotate is bound by residues Thr-119 and Arg-147.

Belongs to the purine/pyrimidine phosphoribosyltransferase family. PyrE subfamily. Homodimer. Requires Mg(2+) as cofactor.

It carries out the reaction orotidine 5'-phosphate + diphosphate = orotate + 5-phospho-alpha-D-ribose 1-diphosphate. Its pathway is pyrimidine metabolism; UMP biosynthesis via de novo pathway; UMP from orotate: step 1/2. Functionally, catalyzes the transfer of a ribosyl phosphate group from 5-phosphoribose 1-diphosphate to orotate, leading to the formation of orotidine monophosphate (OMP). The chain is Orotate phosphoribosyltransferase from Halobacterium salinarum (strain ATCC 700922 / JCM 11081 / NRC-1) (Halobacterium halobium).